Here is a 356-residue protein sequence, read N- to C-terminus: MKREILLERIDKLKQLMPWYVLEYYQSKLAVPYSFTTLYEYLKEYDRFFSWVLESGISNADKISDIPLSVLENMSKKDMESFILYLRERPLLNANTTKQGVSQTTINRTLSALSSLYKYLTEEVENDQGEPYFYRNVMKKVSTKKKKETLAARAENIKQKLFLGDETAGFLTYIDQEHPQQLSNRALSSFNKNKERDLAIIALLLASGVRLSEAVNLDLRDLNLKMMVIDVTRKGGKRDSVNVAAFAKPYLENYLAIRNQRYKTEKTDTALFLTLYRGVPNRIDASSVEKMVAKYSEDFKVRVTPHKLRHTLATRLYDATKSQVLVSHQLGHASTQVTDLYTHIVNDEQKNALDSL.

One can recognise a Core-binding (CB) domain in the interval 16–121; the sequence is LMPWYVLEYY…ALSSLYKYLT (106 aa). Residues 169–354 enclose the Tyr recombinase domain; the sequence is GFLTYIDQEH…VNDEQKNALD (186 aa). Residues Arg-210, Lys-234, His-306, Arg-309, and His-332 contribute to the active site. Tyr-341 functions as the O-(3'-phospho-DNA)-tyrosine intermediate in the catalytic mechanism.

The protein belongs to the 'phage' integrase family. XerS subfamily.

The protein resides in the cytoplasm. With respect to regulation, ftsK is required for recombination. Functionally, site-specific tyrosine recombinase, which acts by catalyzing the cutting and rejoining of the recombining DNA molecules. Essential to convert dimers of the bacterial chromosome into monomers to permit their segregation at cell division. This chain is Tyrosine recombinase XerS, found in Streptococcus pneumoniae (strain P1031).